The following is a 174-amino-acid chain: Crossover junction endodeoxyribonuclease RuvC (174 aa).

Catalysis depends on residues Asp8, Glu69, and Asp141. Mg(2+) contacts are provided by Asp8, Glu69, and Asp141.

It belongs to the RuvC family. As to quaternary structure, homodimer which binds Holliday junction (HJ) DNA. The HJ becomes 2-fold symmetrical on binding to RuvC with unstacked arms; it has a different conformation from HJ DNA in complex with RuvA. In the full resolvosome a probable DNA-RuvA(4)-RuvB(12)-RuvC(2) complex forms which resolves the HJ. Requires Mg(2+) as cofactor.

The protein resides in the cytoplasm. It carries out the reaction Endonucleolytic cleavage at a junction such as a reciprocal single-stranded crossover between two homologous DNA duplexes (Holliday junction).. The RuvA-RuvB-RuvC complex processes Holliday junction (HJ) DNA during genetic recombination and DNA repair. Endonuclease that resolves HJ intermediates. Cleaves cruciform DNA by making single-stranded nicks across the HJ at symmetrical positions within the homologous arms, yielding a 5'-phosphate and a 3'-hydroxyl group; requires a central core of homology in the junction. The consensus cleavage sequence is 5'-(A/T)TT(C/G)-3'. Cleavage occurs on the 3'-side of the TT dinucleotide at the point of strand exchange. HJ branch migration catalyzed by RuvA-RuvB allows RuvC to scan DNA until it finds its consensus sequence, where it cleaves and resolves the cruciform DNA. The chain is Crossover junction endodeoxyribonuclease RuvC from Xanthomonas euvesicatoria pv. vesicatoria (strain 85-10) (Xanthomonas campestris pv. vesicatoria).